A 360-amino-acid polypeptide reads, in one-letter code: MTSKTVLYAKHLEAGAKMVDFHGWEMPINYGSQIEEHNAVRNDAGMFDVSHMTIVDIQGEQAQAFLQKLVANDVAKLTVPGKALYTPMLNEQGGVIDDLIIYFFSNTSYRLVVNSATREKDLAHLAKISADFAVTVTERNEFGMIAVQGPNAKAKTATLLTAEQNAAIEGMKPFFGVQTGDLFIATTGYTGEDGYEIVVPKEQAADLWQQLLDAGVAPAGLGARDTLRLEAGMNLYGLDMDESVSPLAANMAWTIAWEPQSRDFIGRDVLVQQRADQSTDKQVGLVLEEKGILRSGSKVIVDGGEGVITSGTFSPTLGYSVALARVPRSTGDTAQVEMRKKLVTVKVVKPGFVRNGKSIL.

This sequence belongs to the GcvT family. As to quaternary structure, the glycine cleavage system is composed of four proteins: P, T, L and H.

It carries out the reaction N(6)-[(R)-S(8)-aminomethyldihydrolipoyl]-L-lysyl-[protein] + (6S)-5,6,7,8-tetrahydrofolate = N(6)-[(R)-dihydrolipoyl]-L-lysyl-[protein] + (6R)-5,10-methylene-5,6,7,8-tetrahydrofolate + NH4(+). Functionally, the glycine cleavage system catalyzes the degradation of glycine. This is Aminomethyltransferase from Pseudoalteromonas translucida (strain TAC 125).